The sequence spans 119 residues: MKKKYRIKKNDDFQKVFRRGKSFANRQFVVYTLKQEGSNHFRIGLSVSKKIGNAVCRNRIKRYIRQSFHELESQINPENEYIIIARKPAANMDFHEVKKSLIHVLKVGRVLKQKPNNSK.

The protein belongs to the RnpA family. Consists of a catalytic RNA component (M1 or rnpB) and a protein subunit.

It carries out the reaction Endonucleolytic cleavage of RNA, removing 5'-extranucleotides from tRNA precursor.. Its function is as follows. RNaseP catalyzes the removal of the 5'-leader sequence from pre-tRNA to produce the mature 5'-terminus. It can also cleave other RNA substrates such as 4.5S RNA. The protein component plays an auxiliary but essential role in vivo by binding to the 5'-leader sequence and broadening the substrate specificity of the ribozyme. The sequence is that of Ribonuclease P protein component from Listeria monocytogenes serotype 4b (strain CLIP80459).